Here is a 111-residue protein sequence, read N- to C-terminus: uncharacterized protein (111 aa).

A coiled-coil region spans residues 3-29; that stretch reads RKITSYKTSLQGLREENEDVELMNLNL. In terms of domain architecture, PPM-type phosphatase spans 6-111; that stretch reads TSYKTSLQGL…TWWMYCSSYY (106 aa).

This is an uncharacterized protein from Acanthamoeba polyphaga mimivirus (APMV).